The following is a 345-amino-acid chain: Probable 1-aminocyclopropane-1-carboxylate deaminase (345 aa).

At K58 the chain carries N6-(pyridoxal phosphate)lysine. S85 functions as the Nucleophile in the catalytic mechanism.

This sequence belongs to the ACC deaminase/D-cysteine desulfhydrase family. Pyridoxal 5'-phosphate is required as a cofactor.

The enzyme catalyses 1-aminocyclopropane-1-carboxylate + H2O = 2-oxobutanoate + NH4(+). Catalyzes a cyclopropane ring-opening reaction, the irreversible conversion of 1-aminocyclopropane-1-carboxylate (ACC) to ammonia and alpha-ketobutyrate. This Cryptococcus neoformans var. neoformans serotype D (strain JEC21 / ATCC MYA-565) (Filobasidiella neoformans) protein is Probable 1-aminocyclopropane-1-carboxylate deaminase.